A 595-amino-acid chain; its full sequence is DNA mismatch repair protein MutL (595 aa).

This sequence belongs to the DNA mismatch repair MutL/HexB family.

Functionally, this protein is involved in the repair of mismatches in DNA. It is required for dam-dependent methyl-directed DNA mismatch repair. May act as a 'molecular matchmaker', a protein that promotes the formation of a stable complex between two or more DNA-binding proteins in an ATP-dependent manner without itself being part of a final effector complex. This Endomicrobium trichonymphae protein is DNA mismatch repair protein MutL.